Here is a 168-residue protein sequence, read N- to C-terminus: Plastocyanin, chloroplastic (168 aa).

Residues 1–69 (MATVTSTTVA…SAVLASNALA (69 aa)) constitute a chloroplast transit peptide. Residues 70-168 (VEVLLGASDG…AGMVGQVTVN (99 aa)) form the Plastocyanin-like domain. The Cu cation site is built by histidine 106, cysteine 153, histidine 156, and methionine 161.

This sequence belongs to the plastocyanin family. Cu(2+) is required as a cofactor.

The protein resides in the plastid. Its subcellular location is the chloroplast thylakoid membrane. Its function is as follows. Participates in electron transfer between P700 and the cytochrome b6-f complex in photosystem I. This chain is Plastocyanin, chloroplastic (PETE), found in Pisum sativum (Garden pea).